Reading from the N-terminus, the 886-residue chain is KH domain-containing protein hrpk-2 (886 aa).

Positions 359–368 are enriched in basic and acidic residues; the sequence is DNHFYNDKDS. Residues 359-433 are disordered; sequence DNHFYNDKDS…SHRKESACVD (75 aa). 2 stretches are compositionally biased toward basic residues: residues 369-388 and 415-425; these read GKHH…KKHY and HERKKRQRSSH. 2 consecutive KH domains span residues 698 to 761 and 775 to 839; these read KETV…IEKI and PGIF…AYLT.

The polypeptide is KH domain-containing protein hrpk-2 (Caenorhabditis elegans).